A 505-amino-acid polypeptide reads, in one-letter code: Deoxyguanosinetriphosphate triphosphohydrolase (505 aa).

An HD domain is found at 66–273 (RLTHSMEVQQ…MEAADDISYC (208 aa)).

Belongs to the dGTPase family. Type 1 subfamily. Homotetramer. The cofactor is Mg(2+).

It catalyses the reaction dGTP + H2O = 2'-deoxyguanosine + triphosphate + H(+). DGTPase preferentially hydrolyzes dGTP over the other canonical NTPs. This Shigella boydii serotype 18 (strain CDC 3083-94 / BS512) protein is Deoxyguanosinetriphosphate triphosphohydrolase.